We begin with the raw amino-acid sequence, 1325 residues long: uncharacterized protein (1325 aa).

Positions 1 to 18 (MNRIYRVIWNCTLQVFQA) are cleaved as a signal peptide. Cys19 carries the N-palmitoyl cysteine lipid modification. Cys19 is lipidated: S-diacylglycerol cysteine.

This sequence to E.coli YfaL.

Its subcellular location is the cell membrane. This is an uncharacterized protein from Escherichia coli (strain K12).